The chain runs to 124 residues: Large ribosomal subunit protein uL22 (124 aa).

This sequence belongs to the universal ribosomal protein uL22 family. As to quaternary structure, part of the 50S ribosomal subunit.

This protein binds specifically to 23S rRNA; its binding is stimulated by other ribosomal proteins, e.g. L4, L17, and L20. It is important during the early stages of 50S assembly. It makes multiple contacts with different domains of the 23S rRNA in the assembled 50S subunit and ribosome. In terms of biological role, the globular domain of the protein is located near the polypeptide exit tunnel on the outside of the subunit, while an extended beta-hairpin is found that lines the wall of the exit tunnel in the center of the 70S ribosome. This is Large ribosomal subunit protein uL22 from Campylobacter lari (strain RM2100 / D67 / ATCC BAA-1060).